The chain runs to 27 residues: Defensin-like protein 2 (27 aa).

Position 1 is a pyrrolidone carboxylic acid (Gln-1).

Belongs to the DEFL family. In terms of assembly, forms oligomers in its native state.

Its function is as follows. Possesses some antifungal activity sensitive to inorganic cations and antibacterial activity against B.megaterium. This Brassica campestris (Field mustard) protein is Defensin-like protein 2.